The chain runs to 395 residues: Elongation factor Tu (395 aa).

One can recognise a tr-type G domain in the interval 10–204 (KPHVNVGTIG…AVDNWVPLPE (195 aa)). Residues 19–26 (GHVDHGKT) are G1. 19–26 (GHVDHGKT) provides a ligand contact to GTP. T26 is a binding site for Mg(2+). Positions 60–64 (GITIN) are G2. The G3 stretch occupies residues 81 to 84 (DCPG). Residues 81–85 (DCPGH) and 136–139 (NKCD) contribute to the GTP site. The interval 136–139 (NKCD) is G4. The tract at residues 174 to 176 (SAL) is G5.

It belongs to the TRAFAC class translation factor GTPase superfamily. Classic translation factor GTPase family. EF-Tu/EF-1A subfamily. In terms of assembly, monomer.

The protein resides in the cytoplasm. It catalyses the reaction GTP + H2O = GDP + phosphate + H(+). GTP hydrolase that promotes the GTP-dependent binding of aminoacyl-tRNA to the A-site of ribosomes during protein biosynthesis. The protein is Elongation factor Tu of Porphyromonas gingivalis (strain ATCC 33277 / DSM 20709 / CIP 103683 / JCM 12257 / NCTC 11834 / 2561).